The chain runs to 185 residues: Large ribosomal subunit protein uL5 (185 aa).

This sequence belongs to the universal ribosomal protein uL5 family. Part of the 50S ribosomal subunit; part of the 5S rRNA/L5/L18/L25 subcomplex. Contacts the 5S rRNA and the P site tRNA. Forms a bridge to the 30S subunit in the 70S ribosome.

Functionally, this is one of the proteins that bind and probably mediate the attachment of the 5S RNA into the large ribosomal subunit, where it forms part of the central protuberance. In the 70S ribosome it contacts protein S13 of the 30S subunit (bridge B1b), connecting the 2 subunits; this bridge is implicated in subunit movement. Contacts the P site tRNA; the 5S rRNA and some of its associated proteins might help stabilize positioning of ribosome-bound tRNAs. This is Large ribosomal subunit protein uL5 from Rhodopseudomonas palustris (strain HaA2).